Consider the following 260-residue polypeptide: MRPEDRMFHIRAVILRALSLAFLLSLRGAGAIKADHVSTYAAFVQTHRPTGEFMFEFDEDEMFYVDLDKKETVWHLEEFGQAFSFEAQGGLANIAILNNNLNTLIQRSNHTQATNDPPEVTVFPKEPVELGQPNTLICHIDKFFPPVLNVTWLCNGELVTEGVAESLFLPRTDYSFHKFHYLTFVPSAEDFYDCRVEHWGLDQPLLKHWEAQEPIQMPETTETVLCALGLVLGLVGIIVGTVLIIKSLRSGHDPRAQGTL.

Residues 1-28 (MRPEDRMFHIRAVILRALSLAFLLSLRG) form the signal peptide. The interval 29–115 (AGAIKADHVS…QRSNHTQATN (87 aa)) is alpha-1. The Extracellular portion of the chain corresponds to 29–222 (AGAIKADHVS…EPIQMPETTE (194 aa)). Asn-109 and Asn-149 each carry an N-linked (GlcNAc...) asparagine glycan. Residues 116–209 (DPPEVTVFPK…GLDQPLLKHW (94 aa)) form an alpha-2 region. An Ig-like C1-type domain is found at 118-210 (PEVTVFPKEP…LDQPLLKHWE (93 aa)). Cys-138 and Cys-194 are joined by a disulfide. The segment at 210–222 (EAQEPIQMPETTE) is connecting peptide. Residues 223–245 (TVLCALGLVLGLVGIIVGTVLII) traverse the membrane as a helical segment. The Cytoplasmic portion of the chain corresponds to 246 to 260 (KSLRSGHDPRAQGTL).

The protein belongs to the MHC class II family. Heterodimer of an alpha and a beta subunit; also referred as MHC class II molecule. In the endoplasmic reticulum (ER) it forms a heterononamer; 3 MHC class II molecules bind to a CD74 homotrimer (also known as invariant chain or HLA class II histocompatibility antigen gamma chain). In the endosomal/lysosomal system; CD74 undergoes sequential degradation by various proteases; leaving a small fragment termed CLIP on each MHC class II molecule. MHC class II molecule interacts with HLA_DM, and HLA_DO in B-cells, in order to release CLIP and facilitate the binding of antigenic peptides.

It is found in the cell membrane. It localises to the endoplasmic reticulum membrane. The protein localises to the golgi apparatus. The protein resides in the trans-Golgi network membrane. Its subcellular location is the endosome membrane. It is found in the lysosome membrane. Its function is as follows. Binds peptides derived from antigens that access the endocytic route of antigen presenting cells (APC) and presents them on the cell surface for recognition by the CD4 T-cells. The peptide binding cleft accommodates peptides of 10-30 residues. The peptides presented by MHC class II molecules are generated mostly by degradation of proteins that access the endocytic route, where they are processed by lysosomal proteases and other hydrolases. Exogenous antigens that have been endocytosed by the APC are thus readily available for presentation via MHC II molecules, and for this reason this antigen presentation pathway is usually referred to as exogenous. As membrane proteins on their way to degradation in lysosomes as part of their normal turn-over are also contained in the endosomal/lysosomal compartments, exogenous antigens must compete with those derived from endogenous components. Autophagy is also a source of endogenous peptides, autophagosomes constitutively fuse with MHC class II loading compartments. In addition to APCs, other cells of the gastrointestinal tract, such as epithelial cells, express MHC class II molecules and CD74 and act as APCs, which is an unusual trait of the GI tract. To produce a MHC class II molecule that presents an antigen, three MHC class II molecules (heterodimers of an alpha and a beta chain) associate with a CD74 trimer in the ER to form a heterononamer. Soon after the entry of this complex into the endosomal/lysosomal system where antigen processing occurs, CD74 undergoes a sequential degradation by various proteases, including CTSS and CTSL, leaving a small fragment termed CLIP (class-II-associated invariant chain peptide). The removal of CLIP is facilitated by HLA-DM via direct binding to the alpha-beta-CLIP complex so that CLIP is released. HLA-DM stabilizes MHC class II molecules until primary high affinity antigenic peptides are bound. The MHC II molecule bound to a peptide is then transported to the cell membrane surface. In B-cells, the interaction between HLA-DM and MHC class II molecules is regulated by HLA-DO. Primary dendritic cells (DCs) also to express HLA-DO. Lysosomal microenvironment has been implicated in the regulation of antigen loading into MHC II molecules, increased acidification produces increased proteolysis and efficient peptide loading. This is HLA class II histocompatibility antigen, DP alpha 1 chain (HLA-DPA1) from Homo sapiens (Human).